Consider the following 184-residue polypeptide: Adenine phosphoribosyltransferase (184 aa).

This sequence belongs to the purine/pyrimidine phosphoribosyltransferase family. In terms of assembly, homodimer.

It localises to the cytoplasm. The catalysed reaction is AMP + diphosphate = 5-phospho-alpha-D-ribose 1-diphosphate + adenine. It functions in the pathway purine metabolism; AMP biosynthesis via salvage pathway; AMP from adenine: step 1/1. Its function is as follows. Catalyzes a salvage reaction resulting in the formation of AMP, that is energically less costly than de novo synthesis. The sequence is that of Adenine phosphoribosyltransferase from Mycobacterium marinum (strain ATCC BAA-535 / M).